Consider the following 33-residue polypeptide: U23-ctenitoxin-Pn1a (33 aa).

Intrachain disulfides connect Cys3–Cys16, Cys10–Cys21, and Cys15–Cys30.

As to expression, expressed by the venom gland.

Its subcellular location is the secreted. In terms of biological role, non-toxic to mice. In Phoneutria nigriventer (Brazilian armed spider), this protein is U23-ctenitoxin-Pn1a.